Consider the following 74-residue polypeptide: Apolipoprotein C-I, acidic form (74 aa).

Residues 1 to 26 (MRLFLSLPVLVVVLSMVLEGPTPAQG) form the signal peptide.

This sequence belongs to the apolipoprotein C1 family.

It localises to the secreted. This is Apolipoprotein C-I, acidic form (APOC1A) from Colobus guereza (Mantled guereza).